Consider the following 725-residue polypeptide: Ribonuclease R (725 aa).

The 324-residue stretch at 236 to 559 (RKDLRDKLII…QLHRLIKQMV (324 aa)) folds into the RNB domain. Residues 611–689 (GKSLKAQIVS…NLGKVDVVLE (79 aa)) form the S1 motif domain.

It belongs to the RNR ribonuclease family. RNase R subfamily.

It is found in the cytoplasm. It carries out the reaction Exonucleolytic cleavage in the 3'- to 5'-direction to yield nucleoside 5'-phosphates.. 3'-5' exoribonuclease that releases 5'-nucleoside monophosphates and is involved in maturation of structured RNAs. This chain is Ribonuclease R, found in Mycoplasmopsis pulmonis (strain UAB CTIP) (Mycoplasma pulmonis).